We begin with the raw amino-acid sequence, 416 residues long: Exodeoxyribonuclease 7 large subunit (416 aa).

Belongs to the XseA family. Heterooligomer composed of large and small subunits.

The protein resides in the cytoplasm. The enzyme catalyses Exonucleolytic cleavage in either 5'- to 3'- or 3'- to 5'-direction to yield nucleoside 5'-phosphates.. Functionally, bidirectionally degrades single-stranded DNA into large acid-insoluble oligonucleotides, which are then degraded further into small acid-soluble oligonucleotides. This Sulfurimonas denitrificans (strain ATCC 33889 / DSM 1251) (Thiomicrospira denitrificans (strain ATCC 33889 / DSM 1251)) protein is Exodeoxyribonuclease 7 large subunit.